A 678-amino-acid chain; its full sequence is NADPH--cytochrome P450 reductase (678 aa).

N-acetylglycine is present on G2. The Lumenal segment spans residues 2 to 22; the sequence is GDSNVDTGTTTSEMVAEEVSL. The chain crosses the membrane as a helical span at residues 23–43; sequence FSATDMVLFSLIVGLLTYWFI. Residues 44 to 678 lie on the Cytoplasmic side of the membrane; the sequence is FRKKKDEVPE…KGRYSLDVWS (635 aa). S63 bears the Phosphoserine mark. In terms of domain architecture, Flavodoxin-like spans 80-224; that stretch reads IIVFYGSQTG…DFITWREQFW (145 aa). FMN-binding positions include 86–91, 138–141, 173–182, and D208; these read SQTGTA, ATYG, and LGNKTYEHFN. The FAD-binding FR-type domain occupies 279 to 521; the sequence is KNPFLAVVTT…FVRKSQFRLP (243 aa). R298 serves as a coordination point for NADP(+). Residues R424, 454–457, 472–474, Y478, and 488–491 each bind FAD; these read RYYS, CAV, and GVAT. NADP(+)-binding positions include T535, 596 to 597, 602 to 606, and D639; these read SR and KVYVQ. An FAD-binding site is contributed by W677.

This sequence belongs to the NADPH--cytochrome P450 reductase family. The protein in the N-terminal section; belongs to the flavodoxin family. In the C-terminal section; belongs to the flavoprotein pyridine nucleotide cytochrome reductase family. It depends on FAD as a cofactor. FMN is required as a cofactor.

It is found in the endoplasmic reticulum membrane. The catalysed reaction is 2 oxidized [cytochrome P450] + NADPH = 2 reduced [cytochrome P450] + NADP(+) + H(+). In terms of biological role, this enzyme is required for electron transfer from NADP to cytochrome P450 in microsomes. It can also provide electron transfer to heme oxygenase and cytochrome B5. The protein is NADPH--cytochrome P450 reductase of Sus scrofa (Pig).